A 436-amino-acid chain; its full sequence is GTPase Obg (436 aa).

One can recognise an Obg domain in the interval 1-159 (MAFVDQATIE…LKVKLELRVL (159 aa)). The OBG-type G domain occupies 160–335 (ADVGLVGFPS…LLLKVADLLD (176 aa)). Residues 166-173 (GFPSAGKS), 191-195 (FTTID), 213-216 (DLPG), 285-288 (TKMD), and 316-318 (SSV) each bind GTP. Residues Ser173 and Thr193 each coordinate Mg(2+). The 80-residue stretch at 357–436 (KDDHQSTDFQ…GADFAFEFEE (80 aa)) folds into the OCT domain.

Belongs to the TRAFAC class OBG-HflX-like GTPase superfamily. OBG GTPase family. In terms of assembly, monomer. The cofactor is Mg(2+).

It localises to the cytoplasm. Functionally, an essential GTPase which binds GTP, GDP and possibly (p)ppGpp with moderate affinity, with high nucleotide exchange rates and a fairly low GTP hydrolysis rate. Plays a role in control of the cell cycle, stress response, ribosome biogenesis and in those bacteria that undergo differentiation, in morphogenesis control. This chain is GTPase Obg, found in Oenococcus oeni (strain ATCC BAA-331 / PSU-1).